A 128-amino-acid polypeptide reads, in one-letter code: Large ribosomal subunit protein bL17 (128 aa).

This sequence belongs to the bacterial ribosomal protein bL17 family. As to quaternary structure, part of the 50S ribosomal subunit. Contacts protein L32.

The chain is Large ribosomal subunit protein bL17 from Streptococcus pyogenes serotype M49 (strain NZ131).